The following is a 516-amino-acid chain: Katanin p60 ATPase-containing subunit A1 (516 aa).

A disordered region spans residues 75–212; sequence GFKSEPAAPE…DEKKFDPAGY (138 aa). 2 stretches are compositionally biased toward basic and acidic residues: residues 133-143 and 155-167; these read ARKDPPRRSEP and RGGRGPSDRRGDA. Gly residues predominate over residues 168–178; the sequence is RSGGGGRGGAR. The span at 179–212 shows a compositional bias: basic and acidic residues; it reads GSDKDKNRGGKSDKDKKAPSGEEGDEKKFDPAGY. An ATP-binding site is contributed by 274-281; that stretch reads GPPGTGKT.

Belongs to the AAA ATPase family. Katanin p60 subunit A1 subfamily. In terms of assembly, can homooligomerize into hexameric rings, which may be promoted by interaction with microtubules. Interacts with KATNB1, which may serve as a targeting subunit.

Its subcellular location is the cytoplasm. It is found in the cytoskeleton. It localises to the microtubule organizing center. The protein localises to the centrosome. The protein resides in the spindle pole. The catalysed reaction is n ATP + n H2O + a microtubule = n ADP + n phosphate + (n+1) alpha/beta tubulin heterodimers.. Its activity is regulated as follows. ATPase activity is stimulated by microtubules, which promote homooligomerization. ATP-dependent microtubule severing is stimulated by interaction with KATNB1. In terms of biological role, catalytic subunit of a complex which severs microtubules in an ATP-dependent manner. Microtubule severing may promote rapid reorganization of cellular microtubule arrays and the release of microtubules from the centrosome following nucleation. In mitotic spindles this could allow depolymerization of the microtubule end proximal to the centrosome, and subsequent poleward microtubule flux. This chain is Katanin p60 ATPase-containing subunit A1, found in Strongylocentrotus purpuratus (Purple sea urchin).